The following is a 296-amino-acid chain: 4-hydroxy-tetrahydrodipicolinate synthase (296 aa).

Threonine 49 contributes to the pyruvate binding site. Catalysis depends on tyrosine 137, which acts as the Proton donor/acceptor. Lysine 166 serves as the catalytic Schiff-base intermediate with substrate. Isoleucine 208 provides a ligand contact to pyruvate.

It belongs to the DapA family. As to quaternary structure, homotetramer; dimer of dimers.

It localises to the cytoplasm. It carries out the reaction L-aspartate 4-semialdehyde + pyruvate = (2S,4S)-4-hydroxy-2,3,4,5-tetrahydrodipicolinate + H2O + H(+). It participates in amino-acid biosynthesis; L-lysine biosynthesis via DAP pathway; (S)-tetrahydrodipicolinate from L-aspartate: step 3/4. Functionally, catalyzes the condensation of (S)-aspartate-beta-semialdehyde [(S)-ASA] and pyruvate to 4-hydroxy-tetrahydrodipicolinate (HTPA). The protein is 4-hydroxy-tetrahydrodipicolinate synthase of Chlorobium limicola (strain DSM 245 / NBRC 103803 / 6330).